The sequence spans 323 residues: Probable cell division protein WhiA (323 aa).

A DNA-binding region (H-T-H motif) is located at residues 275–309 (TLKELGEMLTTGQVSKSGINHRLRKLDQIAERLRS).

This sequence belongs to the WhiA family.

Functionally, involved in cell division and chromosome segregation. The sequence is that of Probable cell division protein WhiA from Listeria monocytogenes serotype 4b (strain CLIP80459).